Consider the following 322-residue polypeptide: Lipoyl synthase (322 aa).

Positions 66, 71, 77, 92, 96, 99, and 306 each coordinate [4Fe-4S] cluster. One can recognise a Radical SAM core domain in the interval 78–295 (FSKGTATFMI…EKEAYELGFS (218 aa)).

This sequence belongs to the radical SAM superfamily. Lipoyl synthase family. Requires [4Fe-4S] cluster as cofactor.

The protein localises to the cytoplasm. It catalyses the reaction [[Fe-S] cluster scaffold protein carrying a second [4Fe-4S](2+) cluster] + N(6)-octanoyl-L-lysyl-[protein] + 2 oxidized [2Fe-2S]-[ferredoxin] + 2 S-adenosyl-L-methionine + 4 H(+) = [[Fe-S] cluster scaffold protein] + N(6)-[(R)-dihydrolipoyl]-L-lysyl-[protein] + 4 Fe(3+) + 2 hydrogen sulfide + 2 5'-deoxyadenosine + 2 L-methionine + 2 reduced [2Fe-2S]-[ferredoxin]. It functions in the pathway protein modification; protein lipoylation via endogenous pathway; protein N(6)-(lipoyl)lysine from octanoyl-[acyl-carrier-protein]: step 2/2. Its function is as follows. Catalyzes the radical-mediated insertion of two sulfur atoms into the C-6 and C-8 positions of the octanoyl moiety bound to the lipoyl domains of lipoate-dependent enzymes, thereby converting the octanoylated domains into lipoylated derivatives. The polypeptide is Lipoyl synthase (Neisseria meningitidis serogroup C (strain 053442)).